Reading from the N-terminus, the 329-residue chain is GTPase Obg (329 aa).

Residues 1-159 form the Obg domain; the sequence is MQFIDQARIT…WLLHLELKLL (159 aa). Residues 160-328 enclose the OBG-type G domain; that stretch reads AEVGIIGLPN…LLNKIWSKLE (169 aa). ATP contacts are provided by residues 166 to 173, 191 to 195, 213 to 216, 280 to 283, and 309 to 311; these read GLPNAGKS, FTTLI, DIPG, NKKE, and SAI. Residues Ser-173 and Thr-193 each coordinate Mg(2+).

This sequence belongs to the TRAFAC class OBG-HflX-like GTPase superfamily. OBG GTPase family. In terms of assembly, monomer. It depends on Mg(2+) as a cofactor.

It is found in the cytoplasm. Its function is as follows. An essential GTPase which binds GTP, GDP and possibly (p)ppGpp with moderate affinity, with high nucleotide exchange rates and a fairly low GTP hydrolysis rate. Plays a role in control of the cell cycle, stress response, ribosome biogenesis and in those bacteria that undergo differentiation, in morphogenesis control. The chain is GTPase Obg from Prochlorococcus marinus (strain SARG / CCMP1375 / SS120).